Here is a 903-residue protein sequence, read N- to C-terminus: MVCVTDQNNETTSQNRADKLPKSWDPKAVEADLYQGWVDAGYFTADPASDKPGFSIVLPPPNVTGQLHMGHALDHTLMDALARRKRMQGFEVLWLPGMDHAGIATQTKVEEMLKETEGKTRYDYDREEFIAKVWEWKQEYGGKIGEQMRAIGDSVDWSRERFTLDDGLSRAVQTIFKKLFDAGLIYQANRLVNWSPVLETAVSDIEVIYKDVEGELVSIRYGSLNDDEPHVIVATTRVETMLGDVAVAVHPDDERYKDLVGQTLPHPFRDDLSLKVVADDYVDPEFGSGAVKITPAHDPNDYALGLRHNLDMPTIMDKTGRIADTGTQFDGLTREEARIKVREELAAQGRIVKEIRPYVHSVGHSERSGEAIEPRLSLQWFVKVEELAKMSGDAVREGDTTIHPKSLEPRYFDWVDNMHDWTISRQLWWGHRIPIWYGPNDEIICVGPDEQAPEGYVQDPDVLDTWFSSALWPFSTMGWPEKTPELEKFYPTSVLVTAYDILFFWVARMMMFGTFAAKETPELLGEGKDGRPQVPFTDLFLHGLVRDEHGRKMSKSLGNGIDPMDWVENYGADALRFTLARGANPGVDLPVGEDSAQSSRNFATKLFNATKFALMNGAVSEGLPAREELTDADRWIVDLLEQVRLDVDAYLDNYQFAKANEELYHFAWNEFCDWYLEIAKVQIPREGTSAQGENTQKVLGHVLDALLRLLHPAMPFVTEVLWQALTDRTSIVVASWPTAADTNGGVAVDADAARRIGDVEKLVTEVRRFRADQGVKPSQKVPARLDFVACDLQDLEDSVRSLVRIEQPEDDFAASASLEIRLSQATITVELDTSGTVDVAAERKRLEKDLANAQKELETTAKKLGNEAFLSKAPDAVVDKIRGRAQIAQEEVERINKRLEELA.

A compositionally biased stretch (polar residues) spans 1–15 (MVCVTDQNNETTSQN). A disordered region spans residues 1–21 (MVCVTDQNNETTSQNRADKLP). The 'HIGH' region signature appears at 61–71 (PNVTGQLHMGH). Positions 552-556 (KMSKS) match the 'KMSKS' region motif. Lys-555 provides a ligand contact to ATP. Residues 836-903 (TVDVAAERKR…RINKRLEELA (68 aa)) adopt a coiled-coil conformation.

It belongs to the class-I aminoacyl-tRNA synthetase family. ValS type 1 subfamily. As to quaternary structure, monomer.

The protein resides in the cytoplasm. The catalysed reaction is tRNA(Val) + L-valine + ATP = L-valyl-tRNA(Val) + AMP + diphosphate. In terms of biological role, catalyzes the attachment of valine to tRNA(Val). As ValRS can inadvertently accommodate and process structurally similar amino acids such as threonine, to avoid such errors, it has a 'posttransfer' editing activity that hydrolyzes mischarged Thr-tRNA(Val) in a tRNA-dependent manner. In Corynebacterium glutamicum (strain ATCC 13032 / DSM 20300 / JCM 1318 / BCRC 11384 / CCUG 27702 / LMG 3730 / NBRC 12168 / NCIMB 10025 / NRRL B-2784 / 534), this protein is Valine--tRNA ligase.